The following is a 321-amino-acid chain: Probable UDP-sugar transporter protein SLC35A4 (321 aa).

Topologically, residues 1-22 (MYSVNIEPDGSNHSPSRKRLKQ) are cytoplasmic. The helical transmembrane segment at 23–43 (ILWGLMLVLSVTIYGSHAPLI) threads the bilayer. The Lumenal segment spans residues 44-56 (YLCKVNGEIPFSS). The helical transmembrane segment at 57-77 (SAVVLLIELSKFVISLVFFLI) threads the bilayer. Topologically, residues 78-91 (QDWKSLKASVSWHL) are cytoplasmic. The helical transmembrane segment at 92–112 (AAPYAVPAVLYGANNNLVVYI) threads the bilayer. Over 113-119 (QHFMDPS) the chain is Lumenal. Residues 120-140 (SFQVLSNLKIVSTAVLYSLFL) traverse the membrane as a helical segment. At 141–149 (RQRLSVRRW) the chain is on the cytoplasmic side. Residues 150–170 (LSVFLLLAAGVFYSYGGIQDL) form a helical membrane-spanning segment. Residues 171–180 (EKVSSDTNLY) are Lumenal-facing. A helical membrane pass occupies residues 181–201 (VTLPGLLLMLAYCLISGLSAV). Topologically, residues 202 to 211 (YTEMTLKTQK) are cytoplasmic. A helical transmembrane segment spans residues 212–232 (IPLNMQNLYLYSFGIIINLTA). Over 233–247 (HLTSSKNSDFFDGFS) the chain is Lumenal. The chain crosses the membrane as a helical span at residues 248–268 (VWVWVIILSQALNGLIMSLVM). Topologically, residues 269 to 321 (KLSNNITRLFIISFSMLANGFLSFILFQLQLTALFFLAVVLIGLAVYMYYGMK) are cytoplasmic.

This sequence belongs to the nucleotide-sugar transporter family. SLC35A subfamily.

It localises to the golgi apparatus membrane. It catalyses the reaction CDP-L-ribitol(in) + CDP(out) = CDP-L-ribitol(out) + CDP(in). Mediates the transport of CDP-ribitol. Does not exhibit CMP-sialic acid, UDP-galactose and UDP-N-acetylglucosamine transport activity. The sequence is that of Probable UDP-sugar transporter protein SLC35A4 from Xenopus tropicalis (Western clawed frog).